Consider the following 538-residue polypeptide: Nicotinate phosphoribosyltransferase (538 aa).

The nicotinate site is built by Tyr-21 and Thr-210. At His-213 the chain carries Phosphohistidine. Arg-318 serves as a coordination point for nicotinate. Thr-380 contacts 5-phospho-alpha-D-ribose 1-diphosphate.

This sequence belongs to the NAPRTase family. In terms of assembly, homodimer. The cofactor is Mg(2+). It depends on Mn(2+) as a cofactor. In terms of processing, transiently phosphorylated on a His residue during the reaction cycle. Phosphorylation strongly increases the affinity for substrates and increases the rate of nicotinate D-ribonucleotide production. Dephosphorylation regenerates the low-affinity form of the enzyme, leading to product release.

It localises to the cytoplasm. Its subcellular location is the cytosol. It carries out the reaction nicotinate + 5-phospho-alpha-D-ribose 1-diphosphate + ATP + H2O = nicotinate beta-D-ribonucleotide + ADP + phosphate + diphosphate. It functions in the pathway cofactor biosynthesis; NAD(+) biosynthesis; nicotinate D-ribonucleotide from nicotinate: step 1/1. Its function is as follows. Catalyzes the first step in the biosynthesis of NAD from nicotinic acid, the ATP-dependent synthesis of beta-nicotinate D-ribonucleotide from nicotinate and 5-phospho-D-ribose 1-phosphate. Helps prevent cellular oxidative stress via its role in NAD biosynthesis. This Rattus norvegicus (Rat) protein is Nicotinate phosphoribosyltransferase (Naprt).